The sequence spans 799 residues: RasGAP-activating-like protein 1 (799 aa).

C2 domains follow at residues 1–105 (MAKS…DSWI) and 116–231 (VQGE…NGWF). Ca(2+)-binding residues include D21, D27, D74, D76, D82, D149, D155, D202, D204, and D210. Residues 316–544 (GLAGPFLDYL…SRVRDFLDQL (229 aa)) enclose the Ras-GAP domain. T400 bears the Phosphothreonine mark. A PH domain is found at 565–672 (TIVREGFLLK…WLSALRKASA (108 aa)). The Btk-type zinc-finger motif lies at 674–710 (NPGKLVACHPGAFRSGRWTCCLQAERSAAGCSRTHSA). Zn(2+)-binding residues include H682, C693, C694, and C704.

Ca(2+) serves as cofactor.

In terms of biological role, probable inhibitory regulator of the Ras-cyclic AMP pathway. Plays a role in dendrite formation by melanocytes. This is RasGAP-activating-like protein 1 from Mus musculus (Mouse).